The primary structure comprises 406 residues: ATP synthase subunit a (406 aa).

Low complexity-rich tracts occupy residues 22–31 (AGEHGAPAPE) and 43–59 (DAAG…AEHG). The tract at residues 22–76 (AGEHGAPAPEVATPAEGHGARDAAGAATDPHGAAAEHGAAAHEDPAQHGAAGAEA) is disordered. Helical transmembrane passes span 151–171 (KHVV…FAAV), 209–229 (FVPY…FGLV), 232–252 (AATA…TFLI), 278–298 (LWPL…TKPF), 304–324 (LFAN…LIFA), and 351–371 (VQAY…VAHH). The tract at residues 375–406 (DEHEEHGHGAAATGGAHGSHGSHVAGASPGHG) is disordered. The segment covering 383–406 (GAAATGGAHGSHGSHVAGASPGHG) has biased composition (low complexity).

This sequence belongs to the ATPase A chain family. F-type ATPases have 2 components, CF(1) - the catalytic core - and CF(0) - the membrane proton channel. CF(1) has five subunits: alpha(3), beta(3), gamma(1), delta(1), epsilon(1). CF(0) has three main subunits: a(1), b(2) and c(9-12). The alpha and beta chains form an alternating ring which encloses part of the gamma chain. CF(1) is attached to CF(0) by a central stalk formed by the gamma and epsilon chains, while a peripheral stalk is formed by the delta and b chains.

It is found in the cell inner membrane. Key component of the proton channel; it plays a direct role in the translocation of protons across the membrane. The chain is ATP synthase subunit a from Anaeromyxobacter sp. (strain Fw109-5).